The primary structure comprises 393 residues: Glutamyl-tRNA reductase (393 aa).

Substrate is bound by residues 47-50, Ser98, 103-105, and Gln109; these read TCGR and ETD. Cys48 acts as the Nucleophile in catalysis. 177–182 contributes to the NADP(+) binding site; it reads GAGAVG.

The protein belongs to the glutamyl-tRNA reductase family. In terms of assembly, homodimer.

It carries out the reaction (S)-4-amino-5-oxopentanoate + tRNA(Glu) + NADP(+) = L-glutamyl-tRNA(Glu) + NADPH + H(+). It participates in porphyrin-containing compound metabolism; protoporphyrin-IX biosynthesis; 5-aminolevulinate from L-glutamyl-tRNA(Glu): step 1/2. In terms of biological role, catalyzes the NADPH-dependent reduction of glutamyl-tRNA(Glu) to glutamate 1-semialdehyde (GSA). The chain is Glutamyl-tRNA reductase from Pyrobaculum islandicum (strain DSM 4184 / JCM 9189 / GEO3).